Consider the following 346-residue polypeptide: Dihydroorotase (346 aa).

Residues His-17 and His-19 each contribute to the Zn(2+) site. Residues 19–21 and Asn-45 each bind substrate; that span reads HLR. Zn(2+) contacts are provided by Lys-103, His-140, and His-178. At Lys-103 the chain carries N6-carboxylysine. Substrate is bound at residue His-140. Leu-223 is a binding site for substrate. Asp-251 provides a ligand contact to Zn(2+). Asp-251 is a catalytic residue. His-255 and Ala-267 together coordinate substrate.

This sequence belongs to the metallo-dependent hydrolases superfamily. DHOase family. Class II DHOase subfamily. Homodimer. It depends on Zn(2+) as a cofactor.

The catalysed reaction is (S)-dihydroorotate + H2O = N-carbamoyl-L-aspartate + H(+). The protein operates within pyrimidine metabolism; UMP biosynthesis via de novo pathway; (S)-dihydroorotate from bicarbonate: step 3/3. Functionally, catalyzes the reversible cyclization of carbamoyl aspartate to dihydroorotate. This is Dihydroorotase from Synechococcus sp. (strain RCC307).